A 485-amino-acid polypeptide reads, in one-letter code: Putative aldehyde dehydrogenase AldY (485 aa).

231-236 (GSTAVG) provides a ligand contact to NAD(+). Catalysis depends on residues glutamate 253 and cysteine 287.

Belongs to the aldehyde dehydrogenase family.

It catalyses the reaction an aldehyde + NAD(+) + H2O = a carboxylate + NADH + 2 H(+). Functionally, may contribute to protect cells against stress due to ethanol and related compounds. The chain is Putative aldehyde dehydrogenase AldY (aldY) from Bacillus subtilis (strain 168).